A 463-amino-acid polypeptide reads, in one-letter code: FAD-dependent monooxygenase nodM (463 aa).

A helical membrane pass occupies residues 5–25 (EFKVIIVGGSLAGLTLAHCLL). 5 residues coordinate FAD: Glu-35, Gly-49, Arg-108, Asp-305, and Ala-318. Residues 438–458 (ILLGFTGVFTSALAMVVLLHI) form a helical membrane-spanning segment.

This sequence belongs to the paxM FAD-dependent monooxygenase family. Requires FAD as cofactor.

It localises to the membrane. It functions in the pathway secondary metabolite biosynthesis. In terms of biological role, FAD-dependent monooxygenase; part of the gene cluster that mediates the biosynthesis of the indole diterpenes nodulisporic acids (NA). Nodulisporic acid A (NAA) and its chemically modified derivatives are of particular significance because of their highly potent insecticidal activity against blood-feeding arthropods and lack of observable adverse effects on mammals, in particular the tremogenicity associated with the paspaline-derived IDTs is not observed. The geranylgeranyl diphosphate (GGPP) synthase ggs1, localized outside of the cluster, is proposed to catalyze the first step in nodulisporic acid biosynthesis via conversion of farnesyl pyrophosphate and isopentyl pyrophosphate into geranylgeranyl pyrophosphate (GGPP). Condensation of indole-3-glycerol phosphate with GGPP by the prenyl transferase nodC then forms 3-geranylgeranylindole (3-GGI). Epoxidation by the FAD-dependent monooxygenase nodM leads to a single-epoxidized-GGI that is substrate of the terpene cyclase nodB for cyclization to yield emindole SB. The terminal methyl carbon, C28, of emindole SB is then oxidized by the cytochrome P450 monooxygenase nodW to produce nodulisporic acid F (NAF), the pentacyclic core of NAA. NAF is converted to nodulisporic acid E (NAE) via prenylation. This step is probably performed by one of the indole diterpene prenyltransferases nodD1 or nodD2. Several oxidation steps performed by the FAD-linked oxidoreductase nodO and one of the cytochrome P450 monooxygenase nodR, nodX or nodZ further convert NAE to nodulisporic acid D (NAD). NAD is substrate of cytochrome P450 monooxygenase nodJ to produce the precursor of nodulisporic acid C (NAC), converted to NAC by one of the indole diterpene prenyltransferases nodD1 or nodD2. The FAD-dependent monooxygenase nodY2 then oxidizes NAC to nodulisporic acid B (NAB). Finally NAB is converted to NAA by one of the cytochrome P450 monooxygenases nodR, nodX or nodZ. In Hypoxylon pulicicidum, this protein is FAD-dependent monooxygenase nodM.